Reading from the N-terminus, the 595-residue chain is Tripeptidyl-peptidase SED3 (595 aa).

A signal peptide spans 1-22; the sequence is MLLPWQQTIIILFLGVNSLVAA. A propeptide spans 23–201 (removed in mature form); that stretch reads LRNTYRTVEE…KLETIQLSSN (179 aa). Residues Asn207, Asn264, and Asn278 are each glycosylated (N-linked (GlcNAc...) asparagine). Positions 209–595 constitute a Peptidase S53 domain; that stretch reads TITPQCLRDI…EILAKIVRDL (387 aa). Active-site charge relay system residues include Glu285 and Asp289. 2 N-linked (GlcNAc...) asparagine glycosylation sites follow: Asn298 and Asn365. The Charge relay system role is filled by Ser499. Ca(2+) contacts are provided by Asp541 and Ile542. 3 N-linked (GlcNAc...) asparagine glycosylation sites follow: Asn554, Asn557, and Asn569. Positions 573 and 575 each coordinate Ca(2+).

Ca(2+) is required as a cofactor.

The protein localises to the secreted. It is found in the extracellular space. It catalyses the reaction Release of an N-terminal tripeptide from a polypeptide.. Functionally, secreted tripeptidyl-peptidase which degrades proteins at acidic pHs and is involved in virulence. This chain is Tripeptidyl-peptidase SED3 (SED3), found in Arthroderma otae (strain ATCC MYA-4605 / CBS 113480) (Microsporum canis).